A 106-amino-acid chain; its full sequence is SH3 domain-binding glutamic acid-rich-like protein 2 (106 aa).

The short motif at 61–67 is the SH3-binding element; the sequence is QGNPLPP.

Belongs to the SH3BGR family.

It is found in the nucleus. The chain is SH3 domain-binding glutamic acid-rich-like protein 2 (sh3bgrl2) from Xenopus tropicalis (Western clawed frog).